The chain runs to 240 residues: DNA repair protein RecO (240 aa).

The protein belongs to the RecO family.

Its function is as follows. Involved in DNA repair and RecF pathway recombination. The polypeptide is DNA repair protein RecO (Actinobacillus pleuropneumoniae serotype 7 (strain AP76)).